Reading from the N-terminus, the 647-residue chain is Threonine--tRNA ligase (647 aa).

In terms of domain architecture, TGS spans 1-61; it reads MIKITFPDGA…EEDGSIEIVT (61 aa). Residues 240-538 form a catalytic region; sequence DHRKLGKELD…LIETYKGAFP (299 aa). Zn(2+) contacts are provided by C334, H385, and H515.

The protein belongs to the class-II aminoacyl-tRNA synthetase family. Homodimer. Requires Zn(2+) as cofactor.

The protein resides in the cytoplasm. The catalysed reaction is tRNA(Thr) + L-threonine + ATP = L-threonyl-tRNA(Thr) + AMP + diphosphate + H(+). Catalyzes the attachment of threonine to tRNA(Thr) in a two-step reaction: L-threonine is first activated by ATP to form Thr-AMP and then transferred to the acceptor end of tRNA(Thr). Also edits incorrectly charged L-seryl-tRNA(Thr). The polypeptide is Threonine--tRNA ligase (Streptococcus agalactiae serotype V (strain ATCC BAA-611 / 2603 V/R)).